Reading from the N-terminus, the 104-residue chain is Flagellar hook-basal body complex protein FliE (104 aa).

Belongs to the FliE family.

It is found in the bacterial flagellum basal body. The sequence is that of Flagellar hook-basal body complex protein FliE from Escherichia coli O139:H28 (strain E24377A / ETEC).